The following is a 201-amino-acid chain: Potassium-transporting ATPase KdpC subunit (201 aa).

A helical membrane pass occupies residues 10–30 (VLLVALTAVTGLAYPLAVTGI).

Belongs to the KdpC family. In terms of assembly, the system is composed of three essential subunits: KdpA, KdpB and KdpC.

The protein resides in the cell inner membrane. Its function is as follows. Part of the high-affinity ATP-driven potassium transport (or Kdp) system, which catalyzes the hydrolysis of ATP coupled with the electrogenic transport of potassium into the cytoplasm. This subunit acts as a catalytic chaperone that increases the ATP-binding affinity of the ATP-hydrolyzing subunit KdpB by the formation of a transient KdpB/KdpC/ATP ternary complex. The protein is Potassium-transporting ATPase KdpC subunit of Methylorubrum extorquens (strain PA1) (Methylobacterium extorquens).